Here is a 167-residue protein sequence, read N- to C-terminus: Probable D-lyxose ketol-isomerase (167 aa).

4 residues coordinate Mn(2+): His69, His71, Glu82, and His137.

It belongs to the D-lyxose ketol-isomerase family. As to quaternary structure, homodimer. Mn(2+) serves as cofactor.

The catalysed reaction is D-lyxose = D-xylulose. In terms of biological role, sugar isomerase that catalyzes the reversible isomerization of D-lyxose to D-xylulose. The sequence is that of Probable D-lyxose ketol-isomerase (ydaE) from Bacillus subtilis (strain 168).